The sequence spans 184 residues: Large ribosomal subunit protein uL18 (184 aa).

It belongs to the universal ribosomal protein uL18 family. Part of the 50S ribosomal subunit. Contacts the 5S and 23S rRNAs.

In terms of biological role, this is one of the proteins that bind and probably mediate the attachment of the 5S RNA into the large ribosomal subunit, where it forms part of the central protuberance. The chain is Large ribosomal subunit protein uL18 (rpl18) from Haloferax volcanii (strain ATCC 29605 / DSM 3757 / JCM 8879 / NBRC 14742 / NCIMB 2012 / VKM B-1768 / DS2) (Halobacterium volcanii).